The sequence spans 746 residues: Exostosin-1 (746 aa).

Residues methionine 1–lysine 5 lie on the Cytoplasmic side of the membrane. A helical; Signal-anchor for type II membrane protein membrane pass occupies residues arginine 6–valine 26. At glutamine 27 to leucine 746 the chain is on the lumenal side. Asparagine 89 carries an N-linked (GlcNAc...) asparagine glycan. Cystine bridges form between cysteine 98-cysteine 103 and cysteine 109-cysteine 152. Residues leucine 166 and tyrosine 203 each contribute to the a protein site. Residues lysine 267, lysine 269, tyrosine 271, and arginine 280 each contribute to the UDP site. Cysteine 298 and cysteine 312 form a disulfide bridge. Histidine 300 is a binding site for a protein. Tyrosine 319 and tyrosine 324 together coordinate UDP. Residue asparagine 330 is glycosylated (N-linked (GlcNAc...) asparagine). Disulfide bonds link cysteine 334–cysteine 355 and cysteine 652–cysteine 704. UDP is bound by residues arginine 346 and glutamate 349.

It belongs to the glycosyltransferase 47 family. As to quaternary structure, part of the heparan sulfate polymerase, a dimeric complex composed of EXT1 and EXT2. Could also form homooligomeric complexes. Interacts with NDST1. N-glycosylated.

It localises to the golgi apparatus membrane. The protein resides in the golgi apparatus. The protein localises to the cis-Golgi network membrane. Its subcellular location is the endoplasmic reticulum membrane. The enzyme catalyses 3-O-{alpha-D-GlcNAc-[(1-&gt;4)-beta-D-GlcA-(1-&gt;4)-alpha-D-GlcNAc](n)-(1-&gt;4)-beta-D-GlcA-(1-&gt;3)-beta-D-Gal-(1-&gt;3)-beta-D-Gal-(1-&gt;4)-beta-D-Xyl}-L-seryl-[protein] + UDP-alpha-D-glucuronate = 3-O-{[(1-&gt;4)-beta-D-GlcA-(1-&gt;4)-alpha-D-GlcNAc](n+1)-(1-&gt;4)-beta-D-GlcA-(1-&gt;3)-beta-D-Gal-(1-&gt;3)-beta-D-Gal-(1-&gt;4)-beta-D-Xyl}-L-seryl-[protein] + UDP + H(+). It participates in protein modification; protein glycosylation. Its function is as follows. Glycosyltransferase forming with EXT2 the heterodimeric heparan sulfate polymerase which catalyzes the elongation of the heparan sulfate glycan backbone. Glycan backbone extension consists in the alternating transfer of (1-&gt;4)-beta-D-GlcA and (1-&gt;4)-alpha-D-GlcNAc residues from their respective UDP-sugar donors. Both EXT1 and EXT2 are required for the full activity of the polymerase since EXT1 bears the N-acetylglucosaminyl-proteoglycan 4-beta-glucuronosyltransferase activity within the complex while EXT2 carries the glucuronosyl-N-acetylglucosaminyl-proteoglycan 4-alpha-N-acetylglucosaminyltransferase activity. Heparan sulfate proteoglycans are ubiquitous components of the extracellular matrix and play an important role in tissue homeostasis and signaling. The polypeptide is Exostosin-1 (Cricetulus griseus (Chinese hamster)).